Here is a 278-residue protein sequence, read N- to C-terminus: Ras-related protein Rab-40A-like (278 aa).

Residues Gly26, Lys27, and Ser28 each contribute to the GTP site. Ser28 serves as a coordination point for Mg(2+). The tract at residues 41–49 is switch-I; that stretch reads SPYSHLGGI. Residue Asp69 participates in Mg(2+) binding. 3 residues coordinate GTP: Gly72, Asn126, and Arg127. The segment at 72–88 is switch-II; that stretch reads GQGRFCTIFRSYSRGAQ. The SOCS box domain maps to 175 to 228; the sequence is LLRHRLNWLGRPSKVLSLQDLCCRTIVSCTPVHLVDKLPLPIALRSHLKSFSMA. The S-palmitoyl cysteine moiety is linked to residue Cys270. Cys275 carries the S-geranylgeranyl cysteine lipid modification.

It belongs to the small GTPase superfamily. Rab family. It depends on Mg(2+) as a cofactor. Expressed in brain, lung, heart, skeletal muscle, kidney and liver. Highest expression in brain. Expressed in fetal brain and kidney.

It is found in the membrane. The protein localises to the cytoplasm. The protein resides in the mitochondrion. It carries out the reaction GTP + H2O = GDP + phosphate + H(+). It functions in the pathway protein modification; protein ubiquitination. Its activity is regulated as follows. Regulated by guanine nucleotide exchange factors (GEFs) which promote the exchange of bound GDP for free GTP. Regulated by GTPase activating proteins (GAPs) which increase the GTP hydrolysis activity. Inhibited by GDP dissociation inhibitors (GDIs). Its function is as follows. May act as substrate-recognition component of the ECS(RAB40) E3 ubiquitin ligase complex which mediates the ubiquitination and subsequent proteasomal degradation of target proteins. The Rab40 subfamily belongs to the Rab family that are key regulators of intracellular membrane trafficking, from the formation of transport vesicles to their fusion with membranes. Rabs cycle between an inactive GDP-bound form and an active GTP-bound form that is able to recruit to membranes different sets of downstream effectors directly responsible for vesicle formation, movement, tethering and fusion. This Homo sapiens (Human) protein is Ras-related protein Rab-40A-like.